A 605-amino-acid chain; its full sequence is Conglutin beta 7 (605 aa).

Residues Met-1–Gly-30 form the signal peptide. Positions Asn-37–Glu-105 are enriched in basic and acidic residues. 3 disordered regions span residues Asn-37–Thr-193, Leu-346–Asp-367, and Leu-382–Ser-405. Residues Gln-140–Gln-149 show a composition bias toward low complexity. The segment covering Ser-150 to Arg-179 has biased composition (basic and acidic residues). Positions Tyr-184–Gln-342 constitute a Cupin type-1 1 domain. Positions Phe-401 to Glu-563 constitute a Cupin type-1 2 domain. Asn-406 and Asn-513 each carry an N-linked (GlcNAc...) asparagine glycan. The disordered stretch occupies residues Phe-574 to Arg-593.

It belongs to the 7S seed storage protein family. As to quaternary structure, component of globulins complexes which accumulate in seeds.

Seed storage protein. Accumulates during seed development and is hydrolyzed after germination to provide a carbon and nitrogen source for the developing seedling. This Lupinus angustifolius (Narrow-leaved blue lupine) protein is Conglutin beta 7.